Reading from the N-terminus, the 553-residue chain is Thioredoxin domain-containing protein 2 (553 aa).

Disordered stretches follow at residues 1-37 and 77-442; these read MDVD…DANE and TEES…EETM. The span at 99–143 shows a compositional bias: basic and acidic residues; sequence PKQDDSPKSSEETIQPKEGDIPKAPEETIQSKKEDLPKSSEKAIQ. A run of 22 repeats spans residues 113 to 127, 128 to 142, 143 to 157, 158 to 172, 173 to 187, 188 to 202, 203 to 217, 218 to 232, 233 to 247, 248 to 262, 263 to 277, 278 to 292, 293 to 307, 308 to 322, 323 to 337, 338 to 352, 353 to 367, 368 to 382, 383 to 397, 398 to 412, 413 to 427, and 428 to 442. A 22 X 15 AA approximate tandem repeat of Q-P-K-X-G-D-I-P-K-S-[PS]-E-[KE]-X-I region spans residues 113-442; the sequence is QPKEGDIPKA…DILKPEEETM (330 aa). Over residues 173–209 the composition is skewed to basic and acidic residues; sequence QPKEGDIPKAPEETIQSKKEDLPKSSEEAIQPKEGDI. The segment covering 233–254 has biased composition (basic and acidic residues); sequence QPKESDIPKSPEETIQPKEGDI. 2 stretches are compositionally biased toward basic and acidic residues: residues 278–376 and 385–439; these read QPKE…DIPK and KEGD…KPEE. Residue Ser362 is modified to Phosphoserine. At Ser392 the chain carries Phosphoserine. The Thioredoxin domain maps to 429–553; sequence SKEGDILKPE…KLEAVIAELK (125 aa). Cys480 and Cys483 are joined by a disulfide.

Testis-specific. Only expressed during spermiogenesis, prominently in round and elongating spermatids.

Its subcellular location is the cytoplasm. In terms of biological role, probably plays a regulatory role in sperm development. May participate in regulation of fibrous sheath (FS) assembly by supporting the formation of disulfide bonds during sperm tail morphogenesis. May also be required to rectify incorrect disulfide pairing and generate suitable pairs between the FS constituents. Can reduce disulfide bonds in vitro in the presence of NADP and thioredoxin reductase. This is Thioredoxin domain-containing protein 2 (TXNDC2) from Homo sapiens (Human).